The chain runs to 496 residues: COP9 signalosome complex subunit 3 (496 aa).

The 169-residue stretch at 243 to 411 (QASHCLGIVI…GNETTTMLRF (169 aa)) folds into the PCI domain. Residues 468-496 (GSSERSGVVGSTEADGGGDLDEDLMGDGR) form a disordered region. Over residues 483-496 (GGGDLDEDLMGDGR) the composition is skewed to acidic residues.

This sequence belongs to the CSN3 family. Component of the COP9 signalosome (CSN) complex.

It localises to the cytoplasm. The protein localises to the nucleus. In terms of biological role, component of the COP9 signalosome (CSN) complex that acts as an regulator of the ubiquitin (Ubl) conjugation pathway by mediating the deneddylation of the cullin subunit of SCF-type E3 ubiquitin-protein ligase complexes. The CSN complex seems to link protein degradation to sexual development. This is COP9 signalosome complex subunit 3 (csnC) from Emericella nidulans (strain FGSC A4 / ATCC 38163 / CBS 112.46 / NRRL 194 / M139) (Aspergillus nidulans).